The following is a 381-amino-acid chain: Cell division protein FtsZ (381 aa).

Residues 1-25 (MKFINDAIKESEKREKPSSSSMNSE) form a disordered region. The segment covering 7–17 (AIKESEKREKP) has biased composition (basic and acidic residues). GTP is bound by residues 48–52 (GAGNN), 135–137 (GTG), E166, R170, and D213.

Belongs to the FtsZ family. In terms of assembly, homodimer. Polymerizes to form a dynamic ring structure in a strictly GTP-dependent manner. Interacts directly with several other division proteins.

The protein localises to the cytoplasm. Its function is as follows. Essential cell division protein that forms a contractile ring structure (Z ring) at the future cell division site. The regulation of the ring assembly controls the timing and the location of cell division. One of the functions of the FtsZ ring is to recruit other cell division proteins to the septum to produce a new cell wall between the dividing cells. Binds GTP and shows GTPase activity. This chain is Cell division protein FtsZ, found in Methanothermobacter thermautotrophicus (strain ATCC 29096 / DSM 1053 / JCM 10044 / NBRC 100330 / Delta H) (Methanobacterium thermoautotrophicum).